Consider the following 131-residue polypeptide: Ribosome-binding factor A (131 aa).

Belongs to the RbfA family. As to quaternary structure, monomer. Binds 30S ribosomal subunits, but not 50S ribosomal subunits or 70S ribosomes.

It is found in the cytoplasm. One of several proteins that assist in the late maturation steps of the functional core of the 30S ribosomal subunit. Associates with free 30S ribosomal subunits (but not with 30S subunits that are part of 70S ribosomes or polysomes). Required for efficient processing of 16S rRNA. May interact with the 5'-terminal helix region of 16S rRNA. This is Ribosome-binding factor A from Mannheimia succiniciproducens (strain KCTC 0769BP / MBEL55E).